The sequence spans 496 residues: Probable cytosol aminopeptidase (496 aa).

Mn(2+)-binding residues include K261 and D266. K273 is a catalytic residue. Mn(2+)-binding residues include D284, D343, and E345. R347 is an active-site residue.

This sequence belongs to the peptidase M17 family. Requires Mn(2+) as cofactor.

The protein resides in the cytoplasm. It carries out the reaction Release of an N-terminal amino acid, Xaa-|-Yaa-, in which Xaa is preferably Leu, but may be other amino acids including Pro although not Arg or Lys, and Yaa may be Pro. Amino acid amides and methyl esters are also readily hydrolyzed, but rates on arylamides are exceedingly low.. It catalyses the reaction Release of an N-terminal amino acid, preferentially leucine, but not glutamic or aspartic acids.. Its function is as follows. Presumably involved in the processing and regular turnover of intracellular proteins. Catalyzes the removal of unsubstituted N-terminal amino acids from various peptides. The chain is Probable cytosol aminopeptidase from Bacillus licheniformis (strain ATCC 14580 / DSM 13 / JCM 2505 / CCUG 7422 / NBRC 12200 / NCIMB 9375 / NCTC 10341 / NRRL NRS-1264 / Gibson 46).